A 985-amino-acid polypeptide reads, in one-letter code: Rho guanine nucleotide exchange factor 2 (985 aa).

Residues 1–32 (MSRIESLTRARIDRSKEQATKTREKEKMKEAK) form a disordered region. The Phorbol-ester/DAG-type zinc-finger motif lies at 39–86 (GHLFTTISVSGMTMCYACNKSITAKEALICPTCNVTIHNRCKDTLANC). Ser-109, Ser-122, Ser-129, Ser-133, and Ser-137 each carry phosphoserine. Residues 131–161 (RQSLLGSRRGLSSLSLAKSVSTTNIAGHFND) form an interaction with DYNLT1 region. Ser-143 carries the phosphoserine; by PAK4 modification. Phosphoserine is present on residues Ser-151, Ser-163, Ser-172, Ser-174, and Ser-177. One can recognise a DH domain in the interval 236 to 433 (KKQDVIYELI…KELLSNVDQD (198 aa)). Lys-354 carries the N6-acetyllysine modification. Residues 473-572 (KLIHDGCLLW…WIRVIQQSVR (100 aa)) enclose the PH domain. Residues 591 to 615 (LRRIKTKLQQKNQALVELLQMNVEL) adopt a coiled-coil conformation. Phosphoserine occurs at positions 646 and 649. Phosphothreonine; by MAPK1 or MAPK3 is present on Thr-680. Phosphoserine occurs at positions 692, 710, and 781. The residue at position 795 (Thr-795) is a Phosphothreonine. Residues 797-866 (EKQATELALL…RQLAALGQNE (70 aa)) are a coiled coil. A Phosphoserine modification is found at Ser-885. Disordered stretches follow at residues 890–909 (DALY…DRLD) and 918–985 (HRPF…ASES). The residue at position 893 (Tyr-893) is a Phosphotyrosine. Position 895 is a phosphoserine; by PAK4 (Ser-895). Positions 919–938 (RPFDDREAQELGSPEDRLQD) are enriched in basic and acidic residues. Phosphoserine is present on residues Ser-931, Ser-939, and Ser-940. Acidic residues predominate over residues 940–949 (SDPDTCSEEE). Phosphothreonine is present on Thr-944. Residues Ser-946, Ser-951, Ser-952, Ser-955, and Ser-959 each carry the phosphoserine modification.

As to quaternary structure, found in a complex composed at least of ARHGEF2, NOD2 and RIPK2. Interacts with RIPK2; the interaction mediates tyrosine phosphorylation of RIPK2 by Src kinase CSK. Interacts with RIPK1 and RIPK3. Interacts with YWHAZ/14-3-3 zeta; when phosphorylated at Ser-885. Interacts with the kinases PAK4, AURKA and MAPK1. Interacts with RHOA and RAC1. Interacts with NOD1. Interacts (via the N- terminal zinc finger) with CAPN6 (via domain II). Interacts with DYNLT1. Post-translationally, phosphorylation of Ser-885 by PAK1 induces binding to protein YWHAZ, promoting its relocation to microtubules and the inhibition of its activity. Phosphorylated by AURKA and CDK1 during mitosis, which negatively regulates its activity. Phosphorylation by MAPK1 or MAPK3 increases nucleotide exchange activity. Phosphorylation by PAK4 releases GEF-H1 from the microtubules. Phosphorylated on serine, threonine and tyrosine residues in a RIPK2-dependent manner.

It localises to the cytoplasm. The protein localises to the cytoskeleton. Its subcellular location is the cell junction. It is found in the tight junction. The protein resides in the golgi apparatus. It localises to the spindle. The protein localises to the cytoplasmic vesicle. Functionally, activates Rho-GTPases by promoting the exchange of GDP for GTP. May be involved in epithelial barrier permeability, cell motility and polarization, dendritic spine morphology, antigen presentation, leukemic cell differentiation, cell cycle regulation, innate immune response, and cancer. Binds Rac-GTPases, but does not seem to promote nucleotide exchange activity toward Rac-GTPases. May stimulate instead the cortical activity of Rac. Inactive toward CDC42, TC10, or Ras-GTPases. Forms an intracellular sensing system along with NOD1 for the detection of microbial effectors during cell invasion by pathogens. Involved in innate immune signaling transduction pathway promoting cytokine IL6/interleukin-6 and TNF-alpha secretion in macrophage upon stimulation by bacterial peptidoglycans; acts as a signaling intermediate between NOD2 receptor and RIPK2 kinase. Contributes to the tyrosine phosphorylation of RIPK2 through Src tyrosine kinase leading to NF-kappaB activation by NOD2. Overexpression activates Rho-, but not Rac-GTPases, and increases paracellular permeability. Involved in neuronal progenitor cell division and differentiation. Involved in the migration of precerebellar neurons. This Rattus norvegicus (Rat) protein is Rho guanine nucleotide exchange factor 2 (Arhgef2).